Reading from the N-terminus, the 546-residue chain is Cytochrome P450 monooxygenase gloP (546 aa).

A helical transmembrane segment spans residues 17-37 (TLSGGILTFLFIVVIAHFVLT). N-linked (GlcNAc...) asparagine glycosylation is found at Asn-189, Asn-413, and Asn-416. Cys-492 contributes to the heme binding site.

The protein belongs to the cytochrome P450 family. Heme is required as a cofactor.

It localises to the membrane. The protein operates within mycotoxin biosynthesis. Its function is as follows. Cytochrome P450 monooxygenase; part of the gene cluster that mediates the biosynthesis of pneumocandins, lipohexapeptides of the echinocandin family that prevent fungal cell wall formation by non-competitive inhibition of beta-1,3-glucan synthase. The 10,12-dimethylmyristoyl side chain is synthesized by the reducing polyketide synthase gloL/GLPKS4. The thioesterase gloN/GLHYD exclusively interacts with gloL/GLPKS4 to maintain turnover of the polyketide side chain. The 10R,12S-dimethylmyristic acid is then transferred to the first thiolation domain of the nonribosomal peptide synthetase gloA/GLNRPS4 by the acyl-AMP ligase gloD/GLligase, followed by its acylation to L-ornithine to trigger elongation of the cyclic hexapeptide. L-ornithine, 4R-hydroxyl-L-proline (generated from L-proline by the dioxygenase gloF/GLOXY2), 3S-hydroxyl-L-homotyrosine (generated by gloG/GLHtyB, gloH/GLHtyA, gloI/GLHtyC, gloJ/GLHtyD and hydroxylated at C-3 by the dioxygenase gloM/GLOXY1), 3R-hydroxyl-L-glutamine (generated from L-glutamine probably by the dioxygenase gloE/GLOXY3) and 3S-hydroxyl-L-proline (generated from L-proline by the dioxygenase gloF/GLOXY2 to yield pneumocandin B0), or 3S-hydroxyl-4S-methyl-L-proline (generated from L-leucine by the dioxygenase gloC/GLOXY4 to yield pneumocandin A0) are sequentially added to the growing chain. The last C domain of gloA/GLNRPS4 is proposed to be responsible for cyclization by condensation to form the peptide bond between L-ornithine and 3S-hydroxyl-4S-methyl-L-proline (for pneumocandin A0) or 3S-hydroxyl-L-proline (for pneumocandin B0). Finally, the subsequent C-4 hydroxylation of 3S-hydroxyl-L-homotyrosine and L-ornithine dihydroxylation at C-4 and C-5 are performed by the cytochrome P450 monooxygenases gloP/GLP450-1 and gloO/GLP450-2, respectively. This Glarea lozoyensis (strain ATCC 20868 / MF5171) protein is Cytochrome P450 monooxygenase gloP.